The sequence spans 347 residues: Phosphate acyltransferase (347 aa).

Belongs to the PlsX family. As to quaternary structure, homodimer. Probably interacts with PlsY.

It is found in the cytoplasm. It catalyses the reaction a fatty acyl-[ACP] + phosphate = an acyl phosphate + holo-[ACP]. Its pathway is lipid metabolism; phospholipid metabolism. Its function is as follows. Catalyzes the reversible formation of acyl-phosphate (acyl-PO(4)) from acyl-[acyl-carrier-protein] (acyl-ACP). This enzyme utilizes acyl-ACP as fatty acyl donor, but not acyl-CoA. This is Phosphate acyltransferase from Oleidesulfovibrio alaskensis (strain ATCC BAA-1058 / DSM 17464 / G20) (Desulfovibrio alaskensis).